The sequence spans 533 residues: MSWAARPPFLPQRHAAGQCGPVGVRKEMHCGVASRWRRRRPWLDPAAAAAAAVAGGEQQTPEPEPGEAGRDGMGDSGRDSRSPDSSSPNPLPQGVPPPSPPGPPLPPSTAPSLGGSGAPPPPPMPPPPLGSPFPVISSSMGSPGLPPPAPPGFSGPVSSPQINSTVSLPGGGSGPPEDVKPPVLGVRGLHCPPPPGGPGAGKRLCAICGDRSSGKHYGVYSCEGCKGFFKRTIRKDLTYSCRDNKDCTVDKRQRNRCQYCRYQKCLATGMKREAVQEERQRGKDKDGDGEGAGGAPEEMPVDRILEAELAVEQKSDQGVEGPGGTGGSGSSPNDPVTNICQAADKQLFTLVEWAKRIPHFSSLPLDDQVILLRAGWNELLIASFSHRSIDVRDGILLATGLHVHRNSAHSAGVGAIFDRVLTELVSKMRDMRMDKTELGCLRAIILFNPDAKGLSNPSEVEVLREKVYASLETYCKQKYPEQQGRFAKLLLRLPALRSIGLKCLEHLFFFKLIGDTPIDTFLMEMLEAPHQLA.

The disordered stretch occupies residues 1–23 (MSWAARPPFLPQRHAAGQCGPVG). Residues 1 to 204 (MSWAARPPFL…PGGPGAGKRL (204 aa)) are modulating. Residue Arg-25 is modified to Omega-N-methylarginine. Residues 36–181 (WRRRRPWLDP…GSGPPEDVKP (146 aa)) are disordered. The segment covering 46–61 (AAAAAAAVAGGEQQTP) has biased composition (low complexity). Over residues 67–82 (EAGRDGMGDSGRDSRS) the composition is skewed to basic and acidic residues. Pro residues-rich tracts occupy residues 89–109 (NPLPQGVPPPSPPGPPLPPST) and 118–131 (APPPPPMPPPPLGS). Residues 132-143 (PFPVISSSMGSP) show a composition bias toward low complexity. Over residues 144–153 (GLPPPAPPGF) the composition is skewed to pro residues. NR C4-type zinc fingers lie at residues 205–225 (CAICGDRSSGKHYGVYSCEGC) and 241–265 (CRDNKDCTVDKRQRNRCQYCRYQKC). The segment at residues 205-270 (CAICGDRSSG…RYQKCLATGM (66 aa)) is a DNA-binding region (nuclear receptor). The segment at 271-295 (KREAVQEERQRGKDKDGDGEGAGGA) is hinge. Residues 276–288 (QEERQRGKDKDGD) are compositionally biased toward basic and acidic residues. Disordered regions lie at residues 276-299 (QEERQRGKDKDGDGEGAGGAPEEM) and 313-336 (QKSDQGVEGPGGTGGSGSSPNDPV). Positions 296–529 (PEEMPVDRIL…TFLMEMLEAP (234 aa)) constitute an NR LBD domain. Gly residues predominate over residues 320–329 (EGPGGTGGSG).

This sequence belongs to the nuclear hormone receptor family. NR2 subfamily. Homodimer (in vitro). Heterodimer with other retinoic acid receptor family members. Binds DNA preferentially as a RAR/RXR heterodimer. Interacts with NR1H3. Interacts with AKAP13. As to expression, expressed in aortic endothelial cells (at protein level). Expressed in monocytes. Expressed in a variety of tumor cell lines.

It localises to the nucleus. The protein localises to the cytoplasm. Receptor for retinoic acid. Retinoic acid receptors bind as heterodimers to their target response elements in response to their ligands, all-trans or 9-cis retinoic acid, and regulate gene expression in various biological processes. The RAR/RXR heterodimers bind to the retinoic acid response elements (RARE). This chain is Retinoic acid receptor RXR-beta (RXRB), found in Homo sapiens (Human).